The chain runs to 1729 residues: Zinc finger CCCH domain-containing protein 13 (1729 aa).

2 disordered regions span residues 1–40 (MSKI…TTET) and 57–156 (CRFI…NGDI). Residues 10–23 (VENTKTISESTSRR) are compositionally biased toward polar residues. A C3H1-type zinc finger spans residues 36 to 64 (STTETQCRNWLKTGSCLYGNTCRFIHGPS). A phosphoserine mark is found at serine 64 and serine 77. Residues 76–136 (RSPERPTGDL…IKIVKERTPE (61 aa)) show a composition bias toward basic and acidic residues. The stretch at 162–196 (HELSLEMKRQKIQRELMKLEQENMDKREEIIIQKE) forms a coiled coil. Lysine 179 is covalently cross-linked (Glycyl lysine isopeptide (Lys-Gly) (interchain with G-Cter in SUMO2)). Basic and acidic residues predominate over residues 182-193 (QENMDKREEIII). Disordered stretches follow at residues 182 to 528 (QENM…IRDV) and 581 to 1527 (DVYQ…PISD). 4 positions are modified to phosphoserine: serine 198, serine 207, serine 209, and serine 211. The span at 204–213 (SKLSPSPSLR) shows a compositional bias: low complexity. Over residues 214-224 (KSSKSPKRKSS) the composition is skewed to basic residues. Position 242 is a phosphoserine (serine 242). Residues 245-254 (LDQQRNSKGN) are compositionally biased toward polar residues. At threonine 263 the chain carries Phosphothreonine. Serine 265 carries the phosphoserine modification. A compositionally biased stretch (basic and acidic residues) spans 283 to 315 (KYKVKDRIEEKPRDGKDRGRDFEKQREKRDKPR). Serine 316, serine 318, serine 324, and serine 327 each carry phosphoserine. Residues 321-345 (QHHSPLSSRHHSSSSQSGSSIQRHS) are compositionally biased toward low complexity. A phosphothreonine mark is found at threonine 353 and threonine 363. Over residues 358-368 (YQRTLTPSLRR) the composition is skewed to polar residues. A phosphoserine mark is found at serine 369, serine 371, and serine 380. Basic and acidic residues-rich tracts occupy residues 393–528 (PMRE…IRDV) and 581–636 (DVYQ…EKGS). A compositionally biased stretch (polar residues) spans 639–654 (TRGSQMDSHSSGSNYH). The span at 655-701 (DSWETRSSYPERDRYPERDTRDPARDSSFERRHGERDRRDNRERDQR) shows a compositional bias: basic and acidic residues. Serine 704 is subject to Phosphoserine. The stretch at 706 to 865 (IRHQGRSEEL…KERERQREWE (160 aa)) forms a coiled coil. A compositionally biased stretch (basic and acidic residues) spans 710–897 (GRSEELERDE…IPRDSHEERK (188 aa)). 9 positions are modified to phosphoserine: serine 907, serine 909, serine 913, serine 921, serine 924, serine 929, serine 949, serine 951, and serine 953. The segment covering 920–938 (HSPDSDTYHSGDDKNEKHR) has biased composition (basic and acidic residues). Basic and acidic residues predominate over residues 957–1035 (LTEDRQGRWK…GSDRAHDEKK (79 aa)). Position 958 is a phosphothreonine (threonine 958). The span at 1036–1046 (KAKAPKKPVKK) shows a compositional bias: basic residues. The span at 1047 to 1065 (KKEEDVGVERGNLETHEDS) shows a compositional bias: basic and acidic residues. Phosphoserine is present on residues serine 1069, serine 1086, serine 1090, and serine 1093. Over residues 1072-1086 (KGQKKKNIEKKRKRS) the composition is skewed to basic residues. Threonine 1109 is subject to Phosphothreonine. Basic and acidic residues-rich tracts occupy residues 1114-1137 (IKEE…KKEN) and 1149-1159 (PDRTEGLEAEH). 2 stretches are compositionally biased toward low complexity: residues 1160–1176 (TAAT…LSSL) and 1184–1218 (AAAS…TNGS). The span at 1228-1253 (ARGEKVEVSHVTLEDTPHRKLVDQKR) shows a compositional bias: basic and acidic residues. Phosphoserine is present on residues serine 1256, serine 1259, serine 1273, and serine 1275. Over residues 1278–1288 (SAHRSGDDQGS) the composition is skewed to basic and acidic residues. Position 1295 is a phosphoserine (serine 1295). 2 stretches are compositionally biased toward basic and acidic residues: residues 1296 to 1351 (GSRD…DRQV) and 1359 to 1440 (DSRD…ERTF). Serine 1427, serine 1443, serine 1447, serine 1467, serine 1470, serine 1499, and serine 1526 each carry phosphoserine. 2 stretches are compositionally biased toward basic and acidic residues: residues 1447–1482 (SGKR…DRDL) and 1490–1499 (DVSKAERTES).

It belongs to the ZC3H13 family. Component of the WMM complex, a N6-methyltransferase complex composed of a catalytic subcomplex, named MAC, and of an associated subcomplex, named MACOM. The MAC subcomplex is composed of METTL3 and METTL14. The MACOM subcomplex is composed of WTAP, ZC3H13, CBLL1/HAKAI, VIRMA, and, in some cases of RBM15 (RBM15 or RBM15B). Also a component of a MACOM-like complex, named WTAP complex, composed of WTAP, ZC3H13, CBLL1/HAKAI, VIRMA, RBM15, BCLAF1 and THRAP3.

The protein localises to the nucleus speckle. Its subcellular location is the nucleus. It localises to the nucleoplasm. Its function is as follows. Associated component of the WMM complex, a complex that mediates N6-methyladenosine (m6A) methylation of RNAs, a modification that plays a role in the efficiency of mRNA splicing and RNA processing. Acts as a key regulator of m6A methylation by promoting m6A methylation of mRNAs at the 3'-UTR. Controls embryonic stem cells (ESCs) pluripotency via its role in m6A methylation. In the WMM complex, anchors component of the MACOM subcomplex in the nucleus. Also required for bridging WTAP to the RNA-binding component RBM15 (RBM15 or RBM15B). This chain is Zinc finger CCCH domain-containing protein 13, found in Mus musculus (Mouse).